The chain runs to 472 residues: Argininosuccinate lyase (472 aa).

This sequence belongs to the lyase 1 family. Argininosuccinate lyase subfamily.

It is found in the cytoplasm. The enzyme catalyses 2-(N(omega)-L-arginino)succinate = fumarate + L-arginine. It participates in amino-acid biosynthesis; L-arginine biosynthesis; L-arginine from L-ornithine and carbamoyl phosphate: step 3/3. In Synechococcus sp. (strain CC9605), this protein is Argininosuccinate lyase.